A 435-amino-acid chain; its full sequence is Eukaryotic peptide chain release factor subunit 1-3 (435 aa).

An N-acetylalanine modification is found at A2.

The protein belongs to the eukaryotic release factor 1 family. As to quaternary structure, heterodimer of two subunits, one of which binds GTP.

It localises to the cytoplasm. Functionally, directs the termination of nascent peptide synthesis (translation) in response to the termination codons UAA, UAG and UGA. Modulates plant growth and development. This Arabidopsis thaliana (Mouse-ear cress) protein is Eukaryotic peptide chain release factor subunit 1-3 (ERF1-3).